Reading from the N-terminus, the 469-residue chain is UDP-N-acetylmuramate--L-alanine ligase (469 aa).

113–119 (GTHGKTT) is a binding site for ATP.

Belongs to the MurCDEF family.

It is found in the cytoplasm. The enzyme catalyses UDP-N-acetyl-alpha-D-muramate + L-alanine + ATP = UDP-N-acetyl-alpha-D-muramoyl-L-alanine + ADP + phosphate + H(+). It functions in the pathway cell wall biogenesis; peptidoglycan biosynthesis. Its function is as follows. Cell wall formation. This is UDP-N-acetylmuramate--L-alanine ligase from Neisseria meningitidis serogroup B (strain ATCC BAA-335 / MC58).